Reading from the N-terminus, the 458-residue chain is Phosphoglucosamine mutase (458 aa).

Ser106 functions as the Phosphoserine intermediate in the catalytic mechanism. 4 residues coordinate Mg(2+): Ser106, Asp247, Asp249, and Asp251. Ser106 is modified (phosphoserine).

It belongs to the phosphohexose mutase family. The cofactor is Mg(2+). Post-translationally, activated by phosphorylation.

The catalysed reaction is alpha-D-glucosamine 1-phosphate = D-glucosamine 6-phosphate. In terms of biological role, catalyzes the conversion of glucosamine-6-phosphate to glucosamine-1-phosphate. The polypeptide is Phosphoglucosamine mutase (Chlamydia abortus (strain DSM 27085 / S26/3) (Chlamydophila abortus)).